Consider the following 168-residue polypeptide: Putative B3 domain-containing protein Os10g0158600 (168 aa).

Residues 4-97 (VVFASARLNA…KARVMLLNRQ (94 aa)) constitute a DNA-binding region (TF-B3). Positions 105–151 (KTPSTTSSDKNRSLSPSDQLTRASTSAHPSTSKSIPPLRNGTGSTKR) are disordered. Polar residues predominate over residues 106-138 (TPSTTSSDKNRSLSPSDQLTRASTSAHPSTSKS).

The protein resides in the nucleus. The polypeptide is Putative B3 domain-containing protein Os10g0158600 (Oryza sativa subsp. japonica (Rice)).